The primary structure comprises 308 residues: MVRVANSITELIGNTPIVKLNRLADENSADVYLKLEYMNPGSSVKDRIGLAMIEAAEKEGKLKAGNTIIEPTSGNTGIGLAMVAAAKGLKAILVMPDTMSMERRNLLRAYGAELVLTPGAEGMKGAIKKAEELAEKHGYFVPQQFNNPSNPEIHRQTTGKEIVEQFGDDQLDAFVAGIGTGGTITGAGEVLKEAYPSIKIYAVEPSDSPVLSGGKPGPHKIQGIGAGFVPDILNTEVYDEIFPVKNEEAFEYARRAAREEGILGGISSGAAIYAALQVAKKLGKGKKVLAIIPSNGERYLSTPLYQFD.

An N6-(pyridoxal phosphate)lysine modification is found at Lys-45. Residues Asn-75, 179–183, and Ser-267 each bind pyridoxal 5'-phosphate; that span reads GTGGT.

The protein belongs to the cysteine synthase/cystathionine beta-synthase family. Homodimer. Forms CymR(2):CysK(2) or CymR(4):CysK(4) complexes in the absence of O-acetylserine. It depends on pyridoxal 5'-phosphate as a cofactor.

The enzyme catalyses O-acetyl-L-serine + hydrogen sulfide = L-cysteine + acetate. Its pathway is amino-acid biosynthesis; L-cysteine biosynthesis; L-cysteine from L-serine: step 2/2. Functionally, catalyzes the conversion of O-acetylserine to cysteine. Also acts as a sensor of cysteine availability in the signal transduction pathway modulating CymR activity. When cysteine is present, the pool of O-acetylserine (OAS) is low, which leads to the formation of a CymR-CysK complex and transcriptional repression of the CymR regulon occurs. In the absence of cysteine, the OAS pool is high and the CymR-CysK complex is mostly dissociated, leading to a faster dissociation of CymR from its DNA targets and the lifting of CymR-dependent repression. The polypeptide is Cysteine synthase (cysK) (Bacillus subtilis (strain 168)).